The chain runs to 516 residues: Cysteine--tRNA ligase (516 aa).

Cysteine 32 is a Zn(2+) binding site. The 'HIGH' region motif lies at 34–44; that stretch reads PTVYMYAHIGN. 3 residues coordinate Zn(2+): cysteine 230, histidine 255, and glutamate 259. Positions 287–291 match the 'KMSKS' region motif; sequence KMSKS. Position 290 (lysine 290) interacts with ATP.

It belongs to the class-I aminoacyl-tRNA synthetase family. In terms of assembly, monomer. It depends on Zn(2+) as a cofactor.

It is found in the cytoplasm. The catalysed reaction is tRNA(Cys) + L-cysteine + ATP = L-cysteinyl-tRNA(Cys) + AMP + diphosphate. This is Cysteine--tRNA ligase from Salinibacter ruber (strain DSM 13855 / M31).